A 384-amino-acid chain; its full sequence is Flap endonuclease 1 (384 aa).

Residues 1–108 (MGIHKLMDLL…GELARRQKAK (108 aa)) form an N-domain region. Asp-34 is a binding site for Mg(2+). Arg-74 serves as a coordination point for DNA. Residues Asp-90, Glu-162, Glu-164, Asp-183, and Asp-185 each contribute to the Mg(2+) site. The tract at residues 126 to 254 (EALKQEQRNL…VNAFKLITEH (129 aa)) is I-domain. Position 162 (Glu-162) interacts with DNA. DNA is bound by residues Gly-232 and Asp-234. Asp-234 contributes to the Mg(2+) binding site. The disordered stretch occupies residues 340–384 (AKEHKGSQTRLNDFFKVQPKDTSSTSKASKKPTNTKSANKKGGKK). Positions 346-354 (SQTRLNDFF) are interaction with PCNA. The segment covering 359–376 (KDTSSTSKASKKPTNTKS) has biased composition (low complexity).

This sequence belongs to the XPG/RAD2 endonuclease family. FEN1 subfamily. In terms of assembly, interacts with PCNA. Three molecules of FEN1 bind to one PCNA trimer with each molecule binding to one PCNA monomer. PCNA stimulates the nuclease activity without altering cleavage specificity. It depends on Mg(2+) as a cofactor. Post-translationally, phosphorylated. Phosphorylation upon DNA damage induces relocalization to the nuclear plasma.

It is found in the nucleus. The protein localises to the nucleolus. Its subcellular location is the nucleoplasm. The protein resides in the mitochondrion. Functionally, structure-specific nuclease with 5'-flap endonuclease and 5'-3' exonuclease activities involved in DNA replication and repair. During DNA replication, cleaves the 5'-overhanging flap structure that is generated by displacement synthesis when DNA polymerase encounters the 5'-end of a downstream Okazaki fragment. It enters the flap from the 5'-end and then tracks to cleave the flap base, leaving a nick for ligation. Also involved in the long patch base excision repair (LP-BER) pathway, by cleaving within the apurinic/apyrimidinic (AP) site-terminated flap. Acts as a genome stabilization factor that prevents flaps from equilibrating into structures that lead to duplications and deletions. Also possesses 5'-3' exonuclease activity on nicked or gapped double-stranded DNA, and exhibits RNase H activity. Also involved in replication and repair of rDNA and in repairing mitochondrial DNA. This is Flap endonuclease 1 from Tetrahymena thermophila (strain SB210).